The primary structure comprises 245 residues: 2,3-bisphosphoglycerate-dependent phosphoglycerate mutase (245 aa).

Residues 8–15, 21–22, Arg-60, 87–90, Lys-98, 114–115, and 183–184 each bind substrate; these read RHGQSLWN, TG, ERHY, RR, and GN. His-9 functions as the Tele-phosphohistidine intermediate in the catalytic mechanism. Catalysis depends on Glu-87, which acts as the Proton donor/acceptor.

Belongs to the phosphoglycerate mutase family. BPG-dependent PGAM subfamily.

The enzyme catalyses (2R)-2-phosphoglycerate = (2R)-3-phosphoglycerate. The protein operates within carbohydrate degradation; glycolysis; pyruvate from D-glyceraldehyde 3-phosphate: step 3/5. In terms of biological role, catalyzes the interconversion of 2-phosphoglycerate and 3-phosphoglycerate. The sequence is that of 2,3-bisphosphoglycerate-dependent phosphoglycerate mutase from Bacillus cereus (strain B4264).